We begin with the raw amino-acid sequence, 258 residues long: Allene oxide cyclase 3, chloroplastic (258 aa).

The transit peptide at 1 to 56 (MASSSAAMSLESISMTTLNNLSRNHQSHRSSLLGFSRSFQNLGISSNGPDFSSRSR) directs the protein to the chloroplast.

This sequence belongs to the allene oxide cyclase family. As to expression, highly expressed in fully developed leaves.

The protein resides in the plastid. Its subcellular location is the chloroplast. The enzyme catalyses (9Z,13S,15Z)-12,13-epoxyoctadeca-9,11,15-trienoate = (9S,13S,15Z)-12-oxophyto-10,15-dienoate. Functionally, involved in the production of 12-oxo-phytodienoic acid (OPDA), a precursor of jasmonic acid. The chain is Allene oxide cyclase 3, chloroplastic (AOC3) from Arabidopsis thaliana (Mouse-ear cress).